The sequence spans 191 residues: Fe/S biogenesis protein NfuA (191 aa).

[4Fe-4S] cluster contacts are provided by C149 and C152.

It belongs to the NfuA family. As to quaternary structure, homodimer. [4Fe-4S] cluster serves as cofactor.

Involved in iron-sulfur cluster biogenesis. Binds a 4Fe-4S cluster, can transfer this cluster to apoproteins, and thereby intervenes in the maturation of Fe/S proteins. Could also act as a scaffold/chaperone for damaged Fe/S proteins. The polypeptide is Fe/S biogenesis protein NfuA (Buchnera aphidicola subsp. Baizongia pistaciae (strain Bp)).